Reading from the N-terminus, the 264-residue chain is Agamous-like MADS-box protein AGL61 (264 aa).

Residues 62–122 enclose the MADS-box domain; that stretch reads IGRQKIPMVK…KKPFSFGHPS (61 aa).

In terms of assembly, interacts with PHE1/AGL37, PHE2/AGL38, AGL80 and AGL86. Forms a heterodimer with AGL80. In terms of tissue distribution, expressed exclusively in the central cell of the female gametophyte and in early endosperm.

It is found in the nucleus. Functionally, probable transcription factor. Controls central cell differentiation during female gametophyte development. In Arabidopsis thaliana (Mouse-ear cress), this protein is Agamous-like MADS-box protein AGL61 (AGL61).